Here is a 150-residue protein sequence, read N- to C-terminus: Protein-export protein SecB (150 aa).

This sequence belongs to the SecB family. As to quaternary structure, homotetramer, a dimer of dimers. One homotetramer interacts with 1 SecA dimer.

It localises to the cytoplasm. In terms of biological role, one of the proteins required for the normal export of preproteins out of the cell cytoplasm. It is a molecular chaperone that binds to a subset of precursor proteins, maintaining them in a translocation-competent state. It also specifically binds to its receptor SecA. The sequence is that of Protein-export protein SecB from Chromobacterium violaceum (strain ATCC 12472 / DSM 30191 / JCM 1249 / CCUG 213 / NBRC 12614 / NCIMB 9131 / NCTC 9757 / MK).